The primary structure comprises 322 residues: Formimidoylglutamase (322 aa).

Residues histidine 130, aspartate 156, histidine 158, aspartate 160, cysteine 245, and aspartate 247 each contribute to the Mn(2+) site.

Belongs to the arginase family. Requires Mn(2+) as cofactor.

The catalysed reaction is N-formimidoyl-L-glutamate + H2O = formamide + L-glutamate. The protein operates within amino-acid degradation; L-histidine degradation into L-glutamate; L-glutamate from N-formimidoyl-L-glutamate (hydrolase route): step 1/1. Its function is as follows. Catalyzes the conversion of N-formimidoyl-L-glutamate to L-glutamate and formamide. The sequence is that of Formimidoylglutamase from Lysinibacillus sphaericus (strain C3-41).